Here is a 285-residue protein sequence, read N- to C-terminus: Ubiquinone biosynthesis protein COQ4, mitochondrial (285 aa).

Residues M1 to T11 constitute a mitochondrion transit peptide. H166, D167, H170, and E182 together coordinate Zn(2+).

Belongs to the COQ4 family. As to quaternary structure, component of a multi-subunit COQ enzyme complex, composed of at least COQ3, COQ4, COQ5, COQ6, COQ7 and COQ9. Requires Zn(2+) as cofactor.

It is found in the mitochondrion inner membrane. It catalyses the reaction a 4-hydroxy-3-methoxy-5-(all-trans-polyprenyl)benzoate + H(+) = a 2-methoxy-6-(all-trans-polyprenyl)phenol + CO2. It participates in cofactor biosynthesis; ubiquinone biosynthesis. Functionally, lyase that catalyzes the C1-decarboxylation of 4-hydroxy-3-methoxy-5-(all-trans-polyprenyl)benzoic acid into 2-methoxy-6-(all-trans-polyprenyl)phenol during ubiquinone biosynthesis. This Paracoccidioides lutzii (strain ATCC MYA-826 / Pb01) (Paracoccidioides brasiliensis) protein is Ubiquinone biosynthesis protein COQ4, mitochondrial.